We begin with the raw amino-acid sequence, 439 residues long: MTGRRLARFPAFRAGVAQDDDVGSTLSQGSTTGVLSGPNWSYWPSRVLGSADPTTIAHRHGTHRITSPDETWLALQPFLAPAGITGVADVTWLDCLGIPTVQAVRPASLTLSVSQGKAASYRAAQVSAVMESLEGWHAENVTADLWSATARDLEADLTYDPAQLRHRPGSLYHAGVKLDWMVATTLLTGRRTWVPWTAVLVNVATRDCWEPPMFEMDTTGLASGNCYDEATLHALYEVMERHSVAAAVAGETMFEVPTDDVAGSDSAHLVEMIRDAGDDVDLARIDVWDGYYCFAAELTSATLEVTFGGFGLHHDPNVALSRAITEAAQSRITAISGAREDLPSAIYHRFGRVHTYAKARKTSLRLNRARPTPWRVPDVDSLPELVASAATAVANRSGTEPLAVVCDFADACVPVVKVLAPGLVLSSASPMRTPLQEAE.

A YcaO domain is found at 116 to 439; that stretch reads GKAASYRAAQ…PMRTPLQEAE (324 aa).

This is an uncharacterized protein from Mycobacterium tuberculosis (strain CDC 1551 / Oshkosh).